Consider the following 2276-residue polypeptide: Poly [ADP-ribose] polymerase tankyrase (2276 aa).

Composition is skewed to basic residues over residues 1-15 (MARRVNKKKSPVKAA) and 87-98 (KAVKAPKVKAPS). Disordered stretches follow at residues 1–20 (MARRVNKKKSPVKAARKIDG) and 79–103 (SSKTGQKVKAVKAPKVKAPSKKGND). ANK repeat units lie at residues 345–374 (KNITPLHTAAISNSTHMLEAMRAVYPTINI), 378–407 (DNWYTMHYAACAPGTAPMEFLLKNGGSVTM), 411–440 (QTETPLHVAARAGRAVNCTFLMKEMLDLEK), 461–490 (SGNSALHLAVLRNNLDVVDALLAEPTIVVD), 498–527 (NRLTPLMMACGKGYLEMAKKLVEKGALVEG), 531–560 (KKRTPLIHAMLNGQIHTAAFLLAKGASLTL), 564–593 (SGNTAAHYAAAYGFLDCLKLLASIDDNILS), 598–627 (WQLYPLSVAYLKGHYGIVTWLLEGPHKDKA), 675–725 (SGQT…KVDV), 729–758 (EDNTPLHYALTNGNLMLFNLMLDKVANKRN), 970–999 (KDDVLIVQAIMFDKPNVVELILDTASEMHL), 1171–1200 (NGNTILHLAAIKNSTICLMTLIRKKCHVDL), 1204–1233 (DGNTPLALAVHHGRQSSALTLIQANADVTE), 1472–1501 (GLIPPISFAVLQENPNMIRALRNAGASLKT), and 1505–1535 (YGRTPLMYAIMTNNRSVVDAIVGDGKLAVVL). The segment at 1570 to 1649 (VPARVESDEE…STGPKRKKLV (80 aa)) is disordered. 2 stretches are compositionally biased toward acidic residues: residues 1576–1590 (SDEEEEDNSGSESGE) and 1612–1622 (SDDEDDDDDDS). The stretch at 1662–1706 (KENNPLHYFIEPLAWENVELLGDLAAANKTAIVQCLIDKRSPNPI) is one ANK 16 repeat. The WGR domain maps to 1788-1889 (GLVSFCDETQ…ANFRDMPKKY (102 aa)). In terms of domain architecture, PARP alpha-helical spans 1910 to 2045 (KNTEKDPIRR…EIETATRLLC (136 aa)). One can recognise a PARP catalytic domain in the interval 2047–2276 (AEFRQDLDRV…VLPKYIVMYK (230 aa)).

As to expression, expressed throughout the head and tail, in germ cells and somatic cells.

The protein localises to the nucleus. The protein resides in the chromosome. It catalyses the reaction NAD(+) + (ADP-D-ribosyl)n-acceptor = nicotinamide + (ADP-D-ribosyl)n+1-acceptor + H(+).. The catalysed reaction is L-aspartyl-[protein] + NAD(+) = 4-O-(ADP-D-ribosyl)-L-aspartyl-[protein] + nicotinamide. The enzyme catalyses L-glutamyl-[protein] + NAD(+) = 5-O-(ADP-D-ribosyl)-L-glutamyl-[protein] + nicotinamide. Functionally, poly[ADP-ribose] polymerases modify various nuclear proteins by poly(ADP-ribosyl)ation, a post-translational modification synthesized after DNA damage that appears as an obligatory step in a detection/signaling pathway leading to the reparation of DNA strand breaks and programmed cell death. The chain is Poly [ADP-ribose] polymerase tankyrase from Caenorhabditis elegans.